Here is a 538-residue protein sequence, read N- to C-terminus: Phosphoenolpyruvate carboxykinase (ATP) (538 aa).

Residues Arg64, Tyr205, and Lys211 each contribute to the substrate site. ATP-binding positions include Lys211, His230, and 246-254 (GLSGTGKTT). Mn(2+) is bound by residues Lys211 and His230. Mn(2+) is bound at residue Asp267. ATP is bound by residues Glu295, Arg331, 447 to 448 (RI), and Thr453. Arg331 contributes to the substrate binding site.

The protein belongs to the phosphoenolpyruvate carboxykinase (ATP) family. Monomer. It depends on Mn(2+) as a cofactor.

Its subcellular location is the cytoplasm. The enzyme catalyses oxaloacetate + ATP = phosphoenolpyruvate + ADP + CO2. Its pathway is carbohydrate biosynthesis; gluconeogenesis. Its function is as follows. Involved in the gluconeogenesis. Catalyzes the conversion of oxaloacetate (OAA) to phosphoenolpyruvate (PEP) through direct phosphoryl transfer between the nucleoside triphosphate and OAA. The sequence is that of Phosphoenolpyruvate carboxykinase (ATP) from Haemophilus influenzae (strain PittEE).